A 22-amino-acid chain; its full sequence is Lantibiotic mutacin B-Ny266 (22 aa).

Residues 3–7 (SWSFC) constitute a cross-link (lanthionine (Ser-Cys)). The residue at position 5 (Ser-5) is a 2,3-didehydroalanine (Ser). Residues 8–11 (TPGC) constitute a cross-link (beta-methyllanthionine (Thr-Cys)). Thr-14 carries the post-translational modification 2,3-didehydrobutyrine. The lanthionine (Ser-Cys) cross-link spans 16-21 (SFNSYC). Positions 19–22 (SYCC) form a cross-link, S-(2-aminovinyl)-D-cysteine (Ser-Cys).

In terms of processing, maturation of lantibiotics involves the enzymatic conversion of Thr, and Ser into dehydrated AA and the formation of thioether bonds with cysteine. The C-terminal lanthionine undergoes decarboxylation. This is followed by membrane translocation and cleavage of the modified precursor. Post-translationally, it is not established whether the 2,3-didehydrobutyrine is the E- or Z-isomer.

Functionally, lanthionine-containing peptide antibiotic (lantibiotic) active on Gram-positive bacteria. The bactericidal activity of lantibiotics is based on depolarization of energized bacterial cytoplasmic membranes, initiated by the formation of aqueous transmembrane pores. The protein is Lantibiotic mutacin B-Ny266 of Streptococcus mutans.